The chain runs to 360 residues: Histidinol-phosphate aminotransferase 2 (360 aa).

Lys-218 is subject to N6-(pyridoxal phosphate)lysine.

It belongs to the class-II pyridoxal-phosphate-dependent aminotransferase family. Histidinol-phosphate aminotransferase subfamily. As to quaternary structure, homodimer. It depends on pyridoxal 5'-phosphate as a cofactor.

It carries out the reaction L-histidinol phosphate + 2-oxoglutarate = 3-(imidazol-4-yl)-2-oxopropyl phosphate + L-glutamate. It participates in amino-acid biosynthesis; L-histidine biosynthesis; L-histidine from 5-phospho-alpha-D-ribose 1-diphosphate: step 7/9. The chain is Histidinol-phosphate aminotransferase 2 from Nitrosococcus oceani (strain ATCC 19707 / BCRC 17464 / JCM 30415 / NCIMB 11848 / C-107).